Reading from the N-terminus, the 182-residue chain is Constitutive photomorphogenesis protein 10 (182 aa).

The UBC core domain maps to 36–182; the sequence is ASGKRIQREM…AKEWTLRFAK (147 aa).

Belongs to the ubiquitin-conjugating enzyme family. Component of the CDD complex, at least composed of COP10, DET1 and DDB1A. Interacts with E3 ubiquitin ligase COP1. Interacts with E2 ubiquitin conjugating UBC5. Interacts with CSN3, CSN4 and CSN8 subunits of the COP9 complex. Expressed in flower, leaf, stem and seedling. Expressed at lower level in root.

The protein localises to the nucleus. In terms of biological role, component of light signal transduction machinery. Involved in repression of photomorphogenesis in darkness by participating in the CDD complex, a complex probably required to regulate the activity of ubiquitin conjugating enzymes (E2s). Repression of photomorphogenesis is probably mediated by ubiquitination and subsequent degradation of photomorphogenesis-promoting factors such as HY5, HYH and LAF1. Although strongly related to ubiquitin-conjugating enzyme, it has no catalytic activity by itself due to the absence of the conserved Cys active site at position 120. It can however enhance the activity of E2 conjugating enzymes. This chain is Constitutive photomorphogenesis protein 10 (COP10), found in Arabidopsis thaliana (Mouse-ear cress).